A 331-amino-acid polypeptide reads, in one-letter code: UBX domain-containing protein 2B (331 aa).

Composition is skewed to basic and acidic residues over residues Met1 to Ser16 and Asp37 to Arg48. Positions Met1–Lys70 are disordered. Residue Ala2 is modified to N-acetylalanine. A Phosphoserine modification is found at Ser56. Thr59 carries the phosphothreonine modification. Ser66 is subject to Phosphoserine. Residues Asp141 to Ile206 enclose the SEP domain. A phosphoserine mark is found at Ser231, Ser234, and Ser235. One can recognise a UBX domain in the interval Asp252–Gln329.

This sequence belongs to the NSFL1C family. In terms of assembly, interacts with VCP. Does not bind ubiquitin.

It is found in the nucleus. The protein resides in the cytoplasm. The protein localises to the cytosol. It localises to the endoplasmic reticulum. Its subcellular location is the golgi apparatus. It is found in the cytoskeleton. The protein resides in the microtubule organizing center. The protein localises to the centrosome. In terms of biological role, adapter protein required for Golgi and endoplasmic reticulum biogenesis. Involved in Golgi and endoplasmic reticulum maintenance during interphase and in their reassembly at the end of mitosis. The complex formed with VCP has membrane fusion activity; membrane fusion activity requires USO1-GOLGA2 tethering and BET1L. VCPIP1 is also required, but not its deubiquitinating activity. Together with NSFL1C/p47, regulates the centrosomal levels of kinase AURKA/Aurora A during mitotic progression by promoting AURKA removal from centrosomes in prophase. Also, regulates spindle orientation during mitosis. In Mus musculus (Mouse), this protein is UBX domain-containing protein 2B (Ubxn2b).